We begin with the raw amino-acid sequence, 478 residues long: Trigger factor (478 aa).

The region spanning 162-243 is the PPIase FKBP-type domain; sequence GDFVSIDLSA…VKSIKERELP (82 aa). The segment at 424–478 is disordered; the sequence is KDTDGNDIDTTEFFGPSGGAQAEAEGADEADADSDADSDTEADSDTEADEADEAK. Residues 448-478 show a composition bias toward acidic residues; the sequence is EGADEADADSDADSDTEADSDTEADEADEAK.

This sequence belongs to the FKBP-type PPIase family. Tig subfamily.

The protein localises to the cytoplasm. The catalysed reaction is [protein]-peptidylproline (omega=180) = [protein]-peptidylproline (omega=0). Functionally, involved in protein export. Acts as a chaperone by maintaining the newly synthesized protein in an open conformation. Functions as a peptidyl-prolyl cis-trans isomerase. The polypeptide is Trigger factor (Mycobacterium sp. (strain KMS)).